Reading from the N-terminus, the 142-residue chain is Large ribosomal subunit protein uL11 (142 aa).

Belongs to the universal ribosomal protein uL11 family. Part of the ribosomal stalk of the 50S ribosomal subunit. Interacts with L10 and the large rRNA to form the base of the stalk. L10 forms an elongated spine to which L12 dimers bind in a sequential fashion forming a multimeric L10(L12)X complex. In terms of processing, one or more lysine residues are methylated.

Its function is as follows. Forms part of the ribosomal stalk which helps the ribosome interact with GTP-bound translation factors. In Xylella fastidiosa (strain 9a5c), this protein is Large ribosomal subunit protein uL11.